The following is a 431-amino-acid chain: Glycerol-3-phosphate dehydrogenase [NAD(P)+] (431 aa).

Over residues 1-19 (MTSANDKSTDTNVDSTQAE) the composition is skewed to polar residues. A disordered region spans residues 1 to 25 (MTSANDKSTDTNVDSTQAEQKMAEK). Ser79, Phe80, Arg100, and Lys173 together coordinate NADPH. Residues Lys173 and Gly201 each coordinate sn-glycerol 3-phosphate. Ala205 provides a ligand contact to NADPH. Positions 256, 309, 319, 320, and 321 each coordinate sn-glycerol 3-phosphate. Catalysis depends on Lys256, which acts as the Proton acceptor. NADPH is bound at residue Arg320. Residue Glu346 coordinates NADPH.

This sequence belongs to the NAD-dependent glycerol-3-phosphate dehydrogenase family.

The protein resides in the cytoplasm. The enzyme catalyses sn-glycerol 3-phosphate + NAD(+) = dihydroxyacetone phosphate + NADH + H(+). It carries out the reaction sn-glycerol 3-phosphate + NADP(+) = dihydroxyacetone phosphate + NADPH + H(+). It participates in membrane lipid metabolism; glycerophospholipid metabolism. Functionally, catalyzes the reduction of the glycolytic intermediate dihydroxyacetone phosphate (DHAP) to sn-glycerol 3-phosphate (G3P), the key precursor for phospholipid synthesis. The sequence is that of Glycerol-3-phosphate dehydrogenase [NAD(P)+] from Psychrobacter arcticus (strain DSM 17307 / VKM B-2377 / 273-4).